We begin with the raw amino-acid sequence, 947 residues long: Plasma membrane ATPase 2 (947 aa).

Residues 1–103 (MSSTEAKQYK…TDGVHAGQRV (103 aa)) form a disordered region. The Cytoplasmic segment spans residues 1–144 (MSSTEAKQYK…AEENESLIVK (144 aa)). Positions 7-22 (KQYKEKPSKEYLHASD) are enriched in basic and acidic residues. Low complexity predominate over residues 26–61 (PANNSAASSSSSSSTSTSASSSAAAVPRKAAAASAA). Residues 62–74 (DDSDSDEDIDQLI) show a composition bias toward acidic residues. Residues 145-165 (FLMFFVGPIQFVMEAAAILAA) form a helical membrane-spanning segment. Over 166-169 (GLSD) the chain is Extracellular. A helical membrane pass occupies residues 170–189 (WVDVGVICALLLLNASVGFI). Residues 190-320 (QEFQAGSIVD…VEGHFTEVLN (131 aa)) lie on the Cytoplasmic side of the membrane. The helical transmembrane segment at 321-342 (GIGIILLVLVIATLLLVWTACF) threads the bilayer. Residues 343–353 (YRTVGIVSILR) are Extracellular-facing. Residues 354–376 (YTLGITIIGVPVGLPAVVTTTMA) traverse the membrane as a helical segment. At 377–748 (VGAAYLAKKQ…IAILNNSLDI (372 aa)) the chain is on the cytoplasmic side. Residue aspartate 407 is the 4-aspartylphosphate intermediate of the active site. Aspartate 663 and aspartate 667 together coordinate Mg(2+). A helical membrane pass occupies residues 749-767 (NLIVFIAIFADVATLTIAY). The Extracellular portion of the chain corresponds to 768-783 (DNAPYAPEPVKWNLPR). The chain crosses the membrane as a helical span at residues 784-803 (LWGMSIILGIVLAIGSWITL). Residues 804 to 853 (TTMFLPNGGIIQNFGAMNGVMFLQISLTENWLIFVTRAAGPFWSSIPSWQ) are Cytoplasmic-facing. Residues 854–874 (LAGAVFAVDIIATMFTLFGWW) traverse the membrane as a helical segment. The Extracellular segment spans residues 875–886 (SENWTDIVSVVR). The chain crosses the membrane as a helical span at residues 887–903 (VWIWSIGIFCVLGGFYY). Residues 904–947 (IMSTSQAFDRLMNGKSLKEKKSTRSVEDFMAAMQRVSTQHEKSS) lie on the Cytoplasmic side of the membrane.

It belongs to the cation transport ATPase (P-type) (TC 3.A.3) family. Type IIIA subfamily.

Its subcellular location is the cell membrane. The enzyme catalyses ATP + H2O + H(+)(in) = ADP + phosphate + 2 H(+)(out). Functionally, the plasma membrane ATPase of plants and fungi is a hydrogen ion pump. The proton gradient it generates drives the active transport of nutrients by H(+)-symport. The resulting external acidification and/or internal alkinization may mediate growth responses. This Saccharomyces cerevisiae (strain ATCC 204508 / S288c) (Baker's yeast) protein is Plasma membrane ATPase 2 (PMA2).